Here is a 25-residue protein sequence, read N- to C-terminus: Toxin Tpa3 (25 aa).

The protein belongs to the non-disulfide-bridged peptide (NDBP) superfamily. Expressed by the venom gland.

Its subcellular location is the secreted. Unknown. Is not toxic to mammals. The polypeptide is Toxin Tpa3 (Tityus pachyurus (Colombian scorpion)).